A 981-amino-acid chain; its full sequence is Isoleucine--tRNA ligase (981 aa).

Positions 50 to 60 (PTTNGMPHVGH) match the 'HIGH' region motif. The 'KMSKS' region motif lies at 604–608 (KMSKS). Lysine 607 is a binding site for ATP.

The protein belongs to the class-I aminoacyl-tRNA synthetase family. IleS type 2 subfamily. In terms of assembly, monomer. The cofactor is Zn(2+).

It localises to the cytoplasm. The enzyme catalyses tRNA(Ile) + L-isoleucine + ATP = L-isoleucyl-tRNA(Ile) + AMP + diphosphate. In terms of biological role, catalyzes the attachment of isoleucine to tRNA(Ile). As IleRS can inadvertently accommodate and process structurally similar amino acids such as valine, to avoid such errors it has two additional distinct tRNA(Ile)-dependent editing activities. One activity is designated as 'pretransfer' editing and involves the hydrolysis of activated Val-AMP. The other activity is designated 'posttransfer' editing and involves deacylation of mischarged Val-tRNA(Ile). The chain is Isoleucine--tRNA ligase from Pyrobaculum aerophilum (strain ATCC 51768 / DSM 7523 / JCM 9630 / CIP 104966 / NBRC 100827 / IM2).